Here is a 456-residue protein sequence, read N- to C-terminus: Phosphomethylpyrimidine synthase (456 aa).

Substrate is bound by residues Asn-80, Met-109, Tyr-139, His-175, 195–197, 236–239, and Glu-275; these read SRG and DSLR. His-279 provides a ligand contact to Zn(2+). Tyr-302 contributes to the substrate binding site. Residue His-343 participates in Zn(2+) binding. [4Fe-4S] cluster is bound by residues Cys-423, Cys-426, and Cys-431.

The protein belongs to the ThiC family. [4Fe-4S] cluster is required as a cofactor.

It catalyses the reaction 5-amino-1-(5-phospho-beta-D-ribosyl)imidazole + S-adenosyl-L-methionine = 4-amino-2-methyl-5-(phosphooxymethyl)pyrimidine + CO + 5'-deoxyadenosine + formate + L-methionine + 3 H(+). Its pathway is cofactor biosynthesis; thiamine diphosphate biosynthesis. Functionally, catalyzes the synthesis of the hydroxymethylpyrimidine phosphate (HMP-P) moiety of thiamine from aminoimidazole ribotide (AIR) in a radical S-adenosyl-L-methionine (SAM)-dependent reaction. The chain is Phosphomethylpyrimidine synthase from Synechococcus elongatus (strain ATCC 33912 / PCC 7942 / FACHB-805) (Anacystis nidulans R2).